The following is a 186-amino-acid chain: ATP synthase subunit b, chloroplastic (186 aa).

Residues 27 to 43 (IFETNILNLAVVLGILL) traverse the membrane as a helical segment.

This sequence belongs to the ATPase B chain family. F-type ATPases have 2 components, F(1) - the catalytic core - and F(0) - the membrane proton channel. F(1) has five subunits: alpha(3), beta(3), gamma(1), delta(1), epsilon(1). F(0) has four main subunits: a(1), b(1), b'(1) and c(10-14). The alpha and beta chains form an alternating ring which encloses part of the gamma chain. F(1) is attached to F(0) by a central stalk formed by the gamma and epsilon chains, while a peripheral stalk is formed by the delta, b and b' chains.

It is found in the plastid. The protein resides in the chloroplast thylakoid membrane. Its function is as follows. F(1)F(0) ATP synthase produces ATP from ADP in the presence of a proton or sodium gradient. F-type ATPases consist of two structural domains, F(1) containing the extramembraneous catalytic core and F(0) containing the membrane proton channel, linked together by a central stalk and a peripheral stalk. During catalysis, ATP synthesis in the catalytic domain of F(1) is coupled via a rotary mechanism of the central stalk subunits to proton translocation. Functionally, component of the F(0) channel, it forms part of the peripheral stalk, linking F(1) to F(0). The chain is ATP synthase subunit b, chloroplastic from Mesostigma viride (Green alga).